Consider the following 319-residue polypeptide: tRNA uridine(34) hydroxylase (319 aa).

Residues 127 to 221 (KQEDTVIIDA…YGKDPEVQGE (95 aa)) form the Rhodanese domain. The active-site Cysteine persulfide intermediate is the cysteine 181.

It belongs to the TrhO family.

It catalyses the reaction uridine(34) in tRNA + AH2 + O2 = 5-hydroxyuridine(34) in tRNA + A + H2O. In terms of biological role, catalyzes oxygen-dependent 5-hydroxyuridine (ho5U) modification at position 34 in tRNAs. This chain is tRNA uridine(34) hydroxylase, found in Bacillus thuringiensis (strain Al Hakam).